A 404-amino-acid chain; its full sequence is Methionine aminopeptidase 1D, mitochondrial (404 aa).

The N-terminal 58 residues, 1-58 (MNKILKNIINKSSINNVFKTSFNGGISSSSSSSSSYLNNNNNIIKSYNVQQKQQQRYY), are a transit peptide targeting the mitochondrion. Residues 86 to 109 (VRSQRLTKKTASPLEGMNRKERRK) form a disordered region. Residue H232 participates in substrate binding. 3 residues coordinate a divalent metal cation: D249, D260, and H323. H330 is a binding site for substrate. A divalent metal cation is bound by residues E355 and E389.

This sequence belongs to the peptidase M24A family. Methionine aminopeptidase type 1 subfamily. It depends on Co(2+) as a cofactor. The cofactor is Zn(2+). Mn(2+) serves as cofactor. Fe(2+) is required as a cofactor.

It localises to the mitochondrion. It catalyses the reaction Release of N-terminal amino acids, preferentially methionine, from peptides and arylamides.. In terms of biological role, removes the N-terminal methionine from nascent proteins. The N-terminal methionine is often cleaved when the second residue in the primary sequence is small and uncharged (Met-Ala-, Cys, Gly, Pro, Ser, Thr, or Val). The protein is Methionine aminopeptidase 1D, mitochondrial (metap1d) of Dictyostelium discoideum (Social amoeba).